The following is a 288-amino-acid chain: Ribosomal RNA small subunit methyltransferase A (288 aa).

Residues 1–14 (MSKNQGGNKHQGGS) show a composition bias toward polar residues. Positions 1-21 (MSKNQGGNKHQGGSKTHLGHR) are disordered. S-adenosyl-L-methionine contacts are provided by asparagine 29, leucine 31, glycine 56, glutamate 77, aspartate 102, and asparagine 122.

The protein belongs to the class I-like SAM-binding methyltransferase superfamily. rRNA adenine N(6)-methyltransferase family. RsmA subfamily.

Its subcellular location is the cytoplasm. The enzyme catalyses adenosine(1518)/adenosine(1519) in 16S rRNA + 4 S-adenosyl-L-methionine = N(6)-dimethyladenosine(1518)/N(6)-dimethyladenosine(1519) in 16S rRNA + 4 S-adenosyl-L-homocysteine + 4 H(+). Its function is as follows. Specifically dimethylates two adjacent adenosines (A1518 and A1519) in the loop of a conserved hairpin near the 3'-end of 16S rRNA in the 30S particle. May play a critical role in biogenesis of 30S subunits. The sequence is that of Ribosomal RNA small subunit methyltransferase A from Idiomarina loihiensis (strain ATCC BAA-735 / DSM 15497 / L2-TR).